Here is a 126-residue protein sequence, read N- to C-terminus: Hydrogenase maturation factor HypA (126 aa).

His2 lines the Ni(2+) pocket. 4 residues coordinate Zn(2+): Cys78, Cys81, Cys97, and Cys100.

Belongs to the HypA/HybF family.

Its function is as follows. Involved in the maturation of [NiFe] hydrogenases. Required for nickel insertion into the metal center of the hydrogenase. In Methanococcus maripaludis (strain C7 / ATCC BAA-1331), this protein is Hydrogenase maturation factor HypA.